Reading from the N-terminus, the 359-residue chain is CMP-N-acetylneuraminate-poly-alpha-2,8-sialyltransferase (359 aa).

At 1–7 (MRSIRKR) the chain is on the cytoplasmic side. Residues 8-20 (WTICTISLLLIFY) traverse the membrane as a helical; Signal-anchor for type II membrane protein segment. Residues 21–359 (KTKEIARTEE…KLTTGKCVKQ (339 aa)) are Lumenal-facing. 3 N-linked (GlcNAc...) asparagine glycosylation sites follow: asparagine 50, asparagine 74, and asparagine 119. Cystine bridges form between cysteine 142–cysteine 292 and cysteine 156–cysteine 356. The CMP-N-acetyl-beta-neuraminate site is built by asparagine 147 and asparagine 170. Residues asparagine 204 and asparagine 219 are each glycosylated (N-linked (GlcNAc...) asparagine). Residues serine 279, threonine 280, glycine 281, and tryptophan 301 each contribute to the CMP-N-acetyl-beta-neuraminate site. The Proton donor/acceptor role is filled by histidine 331.

It belongs to the glycosyltransferase 29 family. Post-translationally, autopolysialylated.

The protein resides in the golgi apparatus membrane. Its subcellular location is the secreted. It carries out the reaction [N-acetyl-alpha-D-neuraminosyl-(2-&gt;8)](n) + CMP-N-acetyl-beta-neuraminate = [N-acetyl-alpha-D-neuraminosyl-(2-&gt;8)](n+1) + CMP + H(+). Catalyzes the transfer of a sialic acid from a CMP-linked sialic acid donor onto a terminal alpha-2,3-, alpha-2,6-, or alpha-2,8-linked sialic acid of an N-linked glycan protein acceptor through alpha-2,8-linkages. Therefore, participates in polysialic acid synthesis on various sialylated N-acetyllactosaminyl oligosaccharides, including NCAM1 N-glycans, FETUB N-glycans and AHSG. It is noteworthy that alpha-2,3-linked sialic acid is apparently a better acceptor than alpha-2,6-linked sialic acid. The polypeptide is CMP-N-acetylneuraminate-poly-alpha-2,8-sialyltransferase (ST8SIA4) (Pan troglodytes (Chimpanzee)).